Consider the following 222-residue polypeptide: MCPLRSLFLMATLVFLNHLDHLSLARSLPTTTAGPGMFQCLSHSQNLLRAVSDTLQKARQTLEFYSCTSEEIDHEDITKDKTSTVEACLPLELATNESCLASRETSLITHGSCLASGKTSFMTTLCLSSIYEDLKMYHMEFQAMNAKLLMDPKRQIFLDQNMLVAIAELMQALNVSGETVPQKPSLEEPDFYKTKVKLCILLHAFRIRAVTIDRMMSYLSSS.

Residues Met-1–Ala-25 form the signal peptide. Cystine bridges form between Cys-40–Cys-113, Cys-67–Cys-199, and Cys-88–Cys-126. N-linked (GlcNAc...) asparagine glycans are attached at residues Asn-96 and Asn-174.

This sequence belongs to the IL-6 superfamily. As to quaternary structure, heterodimer with IL12B; disulfide-linked. This heterodimer is known as interleukin IL-12. Heterodimer with EBI3/IL27B; not disulfide-linked. This heterodimer is known as interleukin IL-35. Interacts with NBR1; this interaction promotes IL-12 secretion.

It is found in the secreted. In terms of biological role, heterodimerizes with IL12B to form the IL-12 cytokine or with EBI3/IL27B to form the IL-35 cytokine. IL-12 is primarily produced by professional antigen-presenting cells (APCs) such as B-cells and dendritic cells (DCs) as well as macrophages and granulocytes and regulates T-cell and natural killer-cell responses, induces the production of interferon-gamma (IFN-gamma), favors the differentiation of T-helper 1 (Th1) cells and is an important link between innate resistance and adaptive immunity. Mechanistically, exerts its biological effects through a receptor composed of IL12R1 and IL12R2 subunits. Binding to the receptor results in the rapid tyrosine phosphorylation of a number of cellular substrates including the JAK family kinases TYK2 and JAK2. In turn, recruited STAT4 gets phosphorylated and translocates to the nucleus where it regulates cytokine/growth factor responsive genes. As part of IL-35, plays essential roles in maintaining the immune homeostasis of the liver microenvironment and also functions as an immune-suppressive cytokine. Mediates biological events through unconventional receptors composed of IL12RB2 and gp130/IL6ST heterodimers or homodimers. Signaling requires the transcription factors STAT1 and STAT4, which form a unique heterodimer that binds to distinct DNA sites. The sequence is that of Interleukin-12 subunit alpha (IL12A) from Lama glama (Llama).